A 455-amino-acid chain; its full sequence is Killer cell immunoglobulin-like receptor 3DL2 (455 aa).

The first 21 residues, 1-21 (MSLTVVSMACVGFFLLQGAWP), serve as a signal peptide directing secretion. Residues 22–340 (LMGGQDKPFL…SKSGICRHLH (319 aa)) lie on the Extracellular side of the membrane. 3 consecutive Ig-like C2-type domains span residues 42 to 102 (GGHV…RPHS), 137 to 202 (GETV…VPHS), and 237 to 300 (GENV…FRAL). 2 cysteine pairs are disulfide-bonded: Cys-49–Cys-95 and Cys-144–Cys-195. Residues Asn-179, Asn-239, Asn-273, and Asn-306 are each glycosylated (N-linked (GlcNAc...) asparagine). Residues Cys-244 and Cys-293 are joined by a disulfide bond. The chain crosses the membrane as a helical span at residues 341-360 (VLIGTSVVIFLFILLLFFLL). Residues 361 to 455 (YRWCSNKKNA…APQSGLEGVF (95 aa)) lie on the Cytoplasmic side of the membrane.

It belongs to the immunoglobulin superfamily. In terms of assembly, interacts with peptide-free HLA-F open conformer. In terms of tissue distribution, expressed in astrocytes.

The protein resides in the cell membrane. Its function is as follows. Receptor on natural killer (NK) cells and T cells for MHC class I molecules. Upon binding of peptide-free HLA-F open conformer, negatively regulates NK and T cell effector functions. Acts as a receptor on astrocytes for HLA-F. Through interaction with HLA-F, may protect motor neurons from astrocyte-induced toxicity. In Homo sapiens (Human), this protein is Killer cell immunoglobulin-like receptor 3DL2.